We begin with the raw amino-acid sequence, 282 residues long: MKIITTVQEMQQITNELHASGKSIGFVPTMGYLHEGHATLLRKAREENEIVVLSVFVNPLQFGPNEDLDRYPRDIDRDENVAKENGVDYLFYPSVEEMYPAEQTTTVEVVKRTDVLCGKQRPGHFAGVATVLMKLFNITLPTRAYFGMKDAQQVAVIEGFVTDFNIPVTIVPVDIVREEDGLAKSSRNVYLSLEEREEAPHLYGSLCIAKERIEAGERNPEIIMNLVKEHIEKYTKGTVDYADLYAYPSLKAINKIEGRIILAIAVKFENVRLIDNITLMGK.

30 to 37 contacts ATP; that stretch reads MGYLHEGH. Residue H37 is the Proton donor of the active site. Q61 serves as a coordination point for (R)-pantoate. Q61 serves as a coordination point for beta-alanine. 147 to 150 provides a ligand contact to ATP; the sequence is GMKD. Q153 contributes to the (R)-pantoate binding site. ATP-binding positions include V176 and 184–187; that span reads KSSR.

The protein belongs to the pantothenate synthetase family. In terms of assembly, homodimer.

Its subcellular location is the cytoplasm. The enzyme catalyses (R)-pantoate + beta-alanine + ATP = (R)-pantothenate + AMP + diphosphate + H(+). It functions in the pathway cofactor biosynthesis; (R)-pantothenate biosynthesis; (R)-pantothenate from (R)-pantoate and beta-alanine: step 1/1. Catalyzes the condensation of pantoate with beta-alanine in an ATP-dependent reaction via a pantoyl-adenylate intermediate. The polypeptide is Pantothenate synthetase (Bacillus mycoides (strain KBAB4) (Bacillus weihenstephanensis)).